Consider the following 248-residue polypeptide: MLLIPAIDLKDGQCVRLKQGDMDQATVFSEDPAAMARHWVNQGARRLHLVDLNGAFVGKPRNEAAIKAIIAEVGDEIPVQLGGGIRDLNTIERWLDDGLSYVIIGTAAVKNPGFLKDACSAFGGHIIVGLDAKDGKVATDGWSKLTGHEVADLARKYEDYGVEAIIYTDIGRDGMLQGINIDATVKLAQSMSIPVIASGGLSNLADIDNLCAVENEGVEGVICGRAIYSGDLNFTDAQARADKLSNGE.

Residue Asp8 is the Proton acceptor of the active site. Asp131 functions as the Proton donor in the catalytic mechanism.

This sequence belongs to the HisA/HisF family.

Its subcellular location is the cytoplasm. It catalyses the reaction 1-(5-phospho-beta-D-ribosyl)-5-[(5-phospho-beta-D-ribosylamino)methylideneamino]imidazole-4-carboxamide = 5-[(5-phospho-1-deoxy-D-ribulos-1-ylimino)methylamino]-1-(5-phospho-beta-D-ribosyl)imidazole-4-carboxamide. Its pathway is amino-acid biosynthesis; L-histidine biosynthesis; L-histidine from 5-phospho-alpha-D-ribose 1-diphosphate: step 4/9. The polypeptide is 1-(5-phosphoribosyl)-5-[(5-phosphoribosylamino)methylideneamino] imidazole-4-carboxamide isomerase (Cupriavidus pinatubonensis (strain JMP 134 / LMG 1197) (Cupriavidus necator (strain JMP 134))).